The chain runs to 541 residues: Chaperonin GroEL 2 (541 aa).

ATP contacts are provided by residues 29–32, 86–90, glycine 413, and aspartate 492; these read TLGP and DGTTT.

This sequence belongs to the chaperonin (HSP60) family. Forms a cylinder of 14 subunits composed of two heptameric rings stacked back-to-back. Interacts with the co-chaperonin GroES.

It localises to the cytoplasm. The enzyme catalyses ATP + H2O + a folded polypeptide = ADP + phosphate + an unfolded polypeptide.. Functionally, together with its co-chaperonin GroES, plays an essential role in assisting protein folding. The GroEL-GroES system forms a nano-cage that allows encapsulation of the non-native substrate proteins and provides a physical environment optimized to promote and accelerate protein folding. The sequence is that of Chaperonin GroEL 2 from Nocardia farcinica (strain IFM 10152).